The primary structure comprises 84 residues: uncharacterized protein (84 aa).

A run of 2 helical transmembrane segments spans residues 27 to 47 (INHH…LAML) and 52 to 72 (IGHV…FVLI).

The protein to M.tuberculosis Rv2876.

The protein localises to the cell membrane. This is an uncharacterized protein from Mycobacterium leprae (strain TN).